Reading from the N-terminus, the 173-residue chain is Alpha-crystallin A chain (173 aa).

Met-1 is subject to N-acetylmethionine. One can recognise a sHSP domain in the interval 52–162 (LFRSVLESGI…SHSERPIPVS (111 aa)). 4 residues coordinate Zn(2+): His-100, Glu-102, His-107, and His-154. The segment at 142–173 (SGPKVPSNMDPSHSERPIPVSREEKPTSAPSS) is disordered. Residues 153–167 (SHSERPIPVSREEKP) show a composition bias toward basic and acidic residues. The O-linked (GlcNAc) serine glycan is linked to Ser-162.

Belongs to the small heat shock protein (HSP20) family. In terms of assembly, heteropolymer composed of three CRYAA and one CRYAB subunits. Inter-subunit bridging via zinc ions enhances stability, which is crucial as there is no protein turn over in the lens. Can also form homodimers and homotetramers (dimers of dimers) which serve as the building blocks of homooligomers. Within homooligomers, the zinc-binding motif is created from residues of 3 different molecules. His-100 and Glu-102 from one molecule are ligands of the zinc ion, and His-107 and His-154 residues from additional molecules complete the site with tetrahedral coordination geometry.

The protein localises to the cytoplasm. The protein resides in the nucleus. Contributes to the transparency and refractive index of the lens. May act as a chaperone, preventing aggregation of various proteins under a wide range of stress conditions. This chain is Alpha-crystallin A chain (CRYAA), found in Gallus gallus (Chicken).